We begin with the raw amino-acid sequence, 328 residues long: WUSCHEL-related homeobox 6 (328 aa).

A compositionally biased stretch (polar residues) spans methionine 1–glutamine 11. The tract at residues methionine 1–proline 45 is disordered. The segment covering glycine 23–serine 33 has biased composition (gly residues). The homeobox; WUS-type DNA-binding region spans proline 38–glutamine 102.

The protein belongs to the WUS homeobox family.

It is found in the nucleus. Functionally, transcription factor which may be involved in developmental processes. The protein is WUSCHEL-related homeobox 6 (WOX6) of Oryza sativa subsp. indica (Rice).